Here is a 574-residue protein sequence, read N- to C-terminus: MALLCSALSNSTHPSFRSHIGANSENLWHLSADPAQKSKRRCNLTLSSRAARISSALESAKQVKPWQVPKRDWFPPEFMFGAASAAYQIEGAWNEGGKGPSSWDNFCHSHPDRIMDKSNADVAANSYYMYKEDVRMLKEIGMDSYRFSISWPRILPKGTLDGGINHEGIQYYNDLLDCLIENGIKPYITLFHWDTPQALADEYKDFLDRRIVKDYTDYATVCFEHFGDKVKNWFTFNEPHSFCGLGYGTGLHAPGARCSAGMTCVIPEEDALRNPYIVGHNLLLAHAETVDVYNKFYKGDDGQIGMVLDVMAYEPYGNNFLDQQAQERAIDFHIGWFLEPMVRGDYPFSMRSLVGDRLPFFTKSEQEKLVSSYDFVGINYYTSRFAKHIDISPEFIPKINTDDVYSNPEVNDSNGIPIGPDVGMYFIYSYPKGLKNILLRMKEKYGNPPIYITENGTADMDGWGNPPMTDPLDDPLRIEYLQQHMTAIKEAIDLGRRTLRGHFTWSLIDNFEWSLGYLSRFGIVYIDRNDGCKRIMKKSAKWLKEFNGATKKLNNKILGASSCCSGVTHGGGTA.

The transit peptide at 1–55 directs the protein to the chloroplast; that stretch reads MALLCSALSNSTHPSFRSHIGANSENLWHLSADPAQKSKRRCNLTLSSRAARISS. A beta-D-glucoside is bound by residues Gln88, His192, and 237–238; that span reads NE. Residue Glu238 is the Proton donor of the active site. A disulfide bond links Cys258 and Cys264. A beta-D-glucoside-binding positions include Tyr381, Glu454, Trp505, 512 to 513, and Phe521; that span reads EW. Catalysis depends on Glu454, which acts as the Nucleophile.

It belongs to the glycosyl hydrolase 1 family. Homo- and heteromultimer with P60B in a 1:1 stoichiometry. Aggregates to form the fibrillar stromacentre. Expressed in caryopses, coleoptiles, primary leaves, and etiolated and green seedlings, but not in roots.

The protein resides in the plastid. Its subcellular location is the chloroplast stroma. The enzyme catalyses avenacoside B + H2O = 26-desgluco-avenacoside B + D-glucose. With respect to regulation, inhibited by N-(3-Dimethylaminopropyl)-N'-ethylcarbodiimide hydrochloride (EDC). Its function is as follows. Beta-glucosidase acting as a preformed defense system. Hydrolyzes the bisdesmosides avenacosides A and B to 26-desgluco-avenacosides exhibiting fungicidal activity. Can use beta-fucoside &gt; beta-glucoside &gt; beta-galactoside &gt; beta-xyloside as substrates, but not alpha-glycosides, beta-thioglucosides and disaccharides. In Avena sativa (Oat), this protein is Avenacosidase 1 (P60A).